A 216-amino-acid polypeptide reads, in one-letter code: MRTGIIAQKVGMTSVFNDKGERISLTLVKVDDCQVVGHKTLAKHGYNALVIGVKDQKISKVTKPMKQVFANAKIAPKTKLKEFRISEDNFIDIASILEVDHFRVGQFVDITATTIGKGFAGSMKRHNFRGLEASHGVSISHRSHGSTGQRQDPGKVFKGKKMAGHMGCNKVTIQNLKIFAVDTNRKLIMIQGSIPGHKNSYLLVKDAIKKAAITIA.

Positions 136 to 155 (GVSISHRSHGSTGQRQDPGK) are disordered. Position 151 is an N5-methylglutamine (Gln-151).

Belongs to the universal ribosomal protein uL3 family. In terms of assembly, part of the 50S ribosomal subunit. Forms a cluster with proteins L14 and L19. In terms of processing, methylated by PrmB.

Its function is as follows. One of the primary rRNA binding proteins, it binds directly near the 3'-end of the 23S rRNA, where it nucleates assembly of the 50S subunit. The sequence is that of Large ribosomal subunit protein uL3 from Rickettsia prowazekii (strain Madrid E).